Here is a 505-residue protein sequence, read N- to C-terminus: MTKAQESLTLEDVAVDFTWEEWQFLSPAQKDLYRDVMLENYSNLVSVGYQAGKPDALTKLEQGEPLWTLEDEIHSPAHPEIEKADDHLQQPLQNQKILKRTGQRYEHGRTLKSYLGLTNQSRRYNRKEPAEFNGDGAFLHDNHEQMPTEIEFPESRKPISTKSQFLKHQQTHNIEKAHECTDCGKAFLKKSQLTEHKRIHTGKKPHVCSLCGKAFYKKYRLTEHERAHRGEKPHGCSLCGKAFYKRYRLTEHERAHKGEKPYGCSECGKAFPRKSELTEHQRIHTGIKPHQCSECGRAFSRKSLLVVHQRTHTGEKPHTCSECGKGFIQKGNLNIHQRTHTGEKPYGCIDCGKAFSQKSCLVAHQRYHTGKTPFVCPECGQPCSQKSGLIRHQKIHSGEKPYKCSDCGKAFLTKTMLIVHHRTHTGERPYGCDECEKAYFYMSCLVKHKRIHSREKRGDSVKVENPSTASHSLSPSEHVQGKSPVNMVTVAMVAGQCEFAHILHS.

One can recognise a KRAB domain in the interval 8 to 79 (LTLEDVAVDF…EDEIHSPAHP (72 aa)). Residue Lys112 forms a Glycyl lysine isopeptide (Lys-Gly) (interchain with G-Cter in SUMO2) linkage. 10 consecutive C2H2-type zinc fingers follow at residues 178-200 (HECT…KRIH), 206-228 (HVCS…ERAH), 234-256 (HGCS…ERAH), 262-284 (YGCS…QRIH), 290-312 (HQCS…QRTH), 318-340 (HTCS…QRTH), 346-368 (YGCI…QRYH), 374-396 (FVCP…QKIH), 402-424 (YKCS…HRTH), and 430-452 (YGCD…KRIH). The segment at 455–481 (EKRGDSVKVENPSTASHSLSPSEHVQG) is disordered. Over residues 465-477 (NPSTASHSLSPSE) the composition is skewed to polar residues.

This sequence belongs to the krueppel C2H2-type zinc-finger protein family. As to expression, highly expressed in heart, skeletal muscle, and brain. Lower expression in liver, lung, kidney, pancreas and placenta.

It localises to the nucleus. Functionally, transcriptional repressor. Regulator of transcriptional factor complexes and may suppress SRE and AP-1 transcription activities mediated by growth factor signaling pathways. This Homo sapiens (Human) protein is Zinc finger protein 649 (ZNF649).